Consider the following 245-residue polypeptide: 1-(5-phosphoribosyl)-5-[(5-phosphoribosylamino)methylideneamino] imidazole-4-carboxamide isomerase (245 aa).

The Proton acceptor role is filled by Asp-11. The active-site Proton donor is the Asp-132.

The protein belongs to the HisA/HisF family.

The protein localises to the cytoplasm. It catalyses the reaction 1-(5-phospho-beta-D-ribosyl)-5-[(5-phospho-beta-D-ribosylamino)methylideneamino]imidazole-4-carboxamide = 5-[(5-phospho-1-deoxy-D-ribulos-1-ylimino)methylamino]-1-(5-phospho-beta-D-ribosyl)imidazole-4-carboxamide. It functions in the pathway amino-acid biosynthesis; L-histidine biosynthesis; L-histidine from 5-phospho-alpha-D-ribose 1-diphosphate: step 4/9. This chain is 1-(5-phosphoribosyl)-5-[(5-phosphoribosylamino)methylideneamino] imidazole-4-carboxamide isomerase, found in Geobacillus kaustophilus (strain HTA426).